The chain runs to 120 residues: uncharacterized protein (120 aa).

The protein to E.coli YiaW.

This is an uncharacterized protein from Escherichia coli (strain K12).